The chain runs to 167 residues: SsrA-binding protein (167 aa).

Residues 139–167 (QAHDKRHAEKEREWQRDKQRIMRAHNRNA) are disordered. Residues 144 to 158 (RHAEKEREWQRDKQR) show a composition bias toward basic and acidic residues.

The protein belongs to the SmpB family.

The protein localises to the cytoplasm. Required for rescue of stalled ribosomes mediated by trans-translation. Binds to transfer-messenger RNA (tmRNA), required for stable association of tmRNA with ribosomes. tmRNA and SmpB together mimic tRNA shape, replacing the anticodon stem-loop with SmpB. tmRNA is encoded by the ssrA gene; the 2 termini fold to resemble tRNA(Ala) and it encodes a 'tag peptide', a short internal open reading frame. During trans-translation Ala-aminoacylated tmRNA acts like a tRNA, entering the A-site of stalled ribosomes, displacing the stalled mRNA. The ribosome then switches to translate the ORF on the tmRNA; the nascent peptide is terminated with the 'tag peptide' encoded by the tmRNA and targeted for degradation. The ribosome is freed to recommence translation, which seems to be the essential function of trans-translation. This is SsrA-binding protein from Xylella fastidiosa (strain M23).